A 262-amino-acid chain; its full sequence is Indole-3-glycerol phosphate synthase (262 aa).

It belongs to the TrpC family.

The enzyme catalyses 1-(2-carboxyphenylamino)-1-deoxy-D-ribulose 5-phosphate + H(+) = (1S,2R)-1-C-(indol-3-yl)glycerol 3-phosphate + CO2 + H2O. The protein operates within amino-acid biosynthesis; L-tryptophan biosynthesis; L-tryptophan from chorismate: step 4/5. This Bordetella petrii (strain ATCC BAA-461 / DSM 12804 / CCUG 43448) protein is Indole-3-glycerol phosphate synthase.